The sequence spans 286 residues: 2-dehydro-3-deoxyphosphooctonate aldolase (286 aa).

It belongs to the KdsA family.

The protein resides in the cytoplasm. It carries out the reaction D-arabinose 5-phosphate + phosphoenolpyruvate + H2O = 3-deoxy-alpha-D-manno-2-octulosonate-8-phosphate + phosphate. Its pathway is carbohydrate biosynthesis; 3-deoxy-D-manno-octulosonate biosynthesis; 3-deoxy-D-manno-octulosonate from D-ribulose 5-phosphate: step 2/3. It functions in the pathway bacterial outer membrane biogenesis; lipopolysaccharide biosynthesis. This Shewanella denitrificans (strain OS217 / ATCC BAA-1090 / DSM 15013) protein is 2-dehydro-3-deoxyphosphooctonate aldolase.